The following is a 203-amino-acid chain: Large ribosomal subunit protein bL25 (203 aa).

It belongs to the bacterial ribosomal protein bL25 family. CTC subfamily. Part of the 50S ribosomal subunit; part of the 5S rRNA/L5/L18/L25 subcomplex. Contacts the 5S rRNA. Binds to the 5S rRNA independently of L5 and L18.

This is one of the proteins that binds to the 5S RNA in the ribosome where it forms part of the central protuberance. In Cereibacter sphaeroides (strain ATCC 17025 / ATH 2.4.3) (Rhodobacter sphaeroides), this protein is Large ribosomal subunit protein bL25.